The chain runs to 351 residues: DNA polymerase IV (351 aa).

The UmuC domain maps to 3-187 (ILFVDFDYFF…IDIDEVPGVG (185 aa)). Positions 7 and 105 each coordinate Mg(2+). The active site involves Glu106.

Belongs to the DNA polymerase type-Y family. Requires Mg(2+) as cofactor.

The catalysed reaction is DNA(n) + a 2'-deoxyribonucleoside 5'-triphosphate = DNA(n+1) + diphosphate. Functionally, poorly processive, error-prone DNA polymerase involved in untargeted mutagenesis. Copies undamaged DNA at stalled replication forks, which arise in vivo from mismatched or misaligned primer ends. These misaligned primers can be extended by PolIV. Exhibits no 3'-5' exonuclease (proofreading) activity. May be involved in translesional synthesis. The polypeptide is DNA polymerase IV (Sulfurisphaera tokodaii (strain DSM 16993 / JCM 10545 / NBRC 100140 / 7) (Sulfolobus tokodaii)).